The chain runs to 185 residues: Elongation factor P (185 aa).

Belongs to the elongation factor P family.

The protein resides in the cytoplasm. The protein operates within protein biosynthesis; polypeptide chain elongation. In terms of biological role, involved in peptide bond synthesis. Stimulates efficient translation and peptide-bond synthesis on native or reconstituted 70S ribosomes in vitro. Probably functions indirectly by altering the affinity of the ribosome for aminoacyl-tRNA, thus increasing their reactivity as acceptors for peptidyl transferase. This chain is Elongation factor P (efp), found in Nostoc sp. (strain PCC 7120 / SAG 25.82 / UTEX 2576).